We begin with the raw amino-acid sequence, 349 residues long: Phenylalanine--tRNA ligase alpha subunit (349 aa).

Glutamate 259 lines the Mg(2+) pocket.

It belongs to the class-II aminoacyl-tRNA synthetase family. Phe-tRNA synthetase alpha subunit type 1 subfamily. As to quaternary structure, tetramer of two alpha and two beta subunits. Mg(2+) is required as a cofactor.

It localises to the cytoplasm. It catalyses the reaction tRNA(Phe) + L-phenylalanine + ATP = L-phenylalanyl-tRNA(Phe) + AMP + diphosphate + H(+). The polypeptide is Phenylalanine--tRNA ligase alpha subunit (Lactobacillus gasseri (strain ATCC 33323 / DSM 20243 / BCRC 14619 / CIP 102991 / JCM 1131 / KCTC 3163 / NCIMB 11718 / NCTC 13722 / AM63)).